The primary structure comprises 117 residues: Large ribosomal subunit protein bL20 (117 aa).

Belongs to the bacterial ribosomal protein bL20 family.

Binds directly to 23S ribosomal RNA and is necessary for the in vitro assembly process of the 50S ribosomal subunit. It is not involved in the protein synthesizing functions of that subunit. The polypeptide is Large ribosomal subunit protein bL20 (Campylobacter jejuni subsp. jejuni serotype O:6 (strain 81116 / NCTC 11828)).